We begin with the raw amino-acid sequence, 406 residues long: 2,3-bisphosphoglycerate-independent phosphoglycerate mutase (406 aa).

It belongs to the BPG-independent phosphoglycerate mutase family. A-PGAM subfamily.

It carries out the reaction (2R)-2-phosphoglycerate = (2R)-3-phosphoglycerate. Its pathway is carbohydrate degradation; glycolysis; pyruvate from D-glyceraldehyde 3-phosphate: step 3/5. Functionally, catalyzes the interconversion of 2-phosphoglycerate and 3-phosphoglycerate. The chain is 2,3-bisphosphoglycerate-independent phosphoglycerate mutase from Methanococcus maripaludis (strain C5 / ATCC BAA-1333).